The sequence spans 61 residues: Large ribosomal subunit protein uL30 (61 aa).

It belongs to the universal ribosomal protein uL30 family. In terms of assembly, part of the 50S ribosomal subunit.

The polypeptide is Large ribosomal subunit protein uL30 (Oenococcus oeni (strain ATCC BAA-331 / PSU-1)).